A 431-amino-acid chain; its full sequence is 5-methylthioadenosine/S-adenosylhomocysteine deaminase (431 aa).

His66 and His68 together coordinate Zn(2+). Residues Glu95, Arg147, and His185 each coordinate substrate. A Zn(2+)-binding site is contributed by His212. Substrate contacts are provided by Glu215 and Asp300. Asp300 is a binding site for Zn(2+).

It belongs to the metallo-dependent hydrolases superfamily. MTA/SAH deaminase family. Requires Zn(2+) as cofactor.

It carries out the reaction S-adenosyl-L-homocysteine + H2O + H(+) = S-inosyl-L-homocysteine + NH4(+). The enzyme catalyses S-methyl-5'-thioadenosine + H2O + H(+) = S-methyl-5'-thioinosine + NH4(+). Catalyzes the deamination of 5-methylthioadenosine and S-adenosyl-L-homocysteine into 5-methylthioinosine and S-inosyl-L-homocysteine, respectively. Is also able to deaminate adenosine. This is 5-methylthioadenosine/S-adenosylhomocysteine deaminase from Desulfitobacterium hafniense (strain Y51).